Here is a 306-residue protein sequence, read N- to C-terminus: MQQQQAWAAGLGGLAVAGVGEEGGGGGPAPTTVDEASMERSKSFVKALQELKNLRPQLYSASEYCEKSYLHSEQKQMVLDNLKDYAVRALVNAVDHLGTVAYKLTDLYEQQASEVSTLELKVACLNQQVLTCQTYTDKEGIRQQQMTGTATRHHKHYIVPTLANKRMQAFSEMQTDADIDSRPRPYPSAKTLFWHLASEKNSKTNGARQSEFVLEETKATKPASRGKEPSTSPLPKHLQTNLASSDFAMHNVGMKDQPGVRHLSSFSSFDNPRGRQIQKAPLRTKSMLAAFFVKHKSGKMKNVSVR.

The tract at residues 200-236 (KNSKTNGARQSEFVLEETKATKPASRGKEPSTSPLPK) is disordered.

This sequence belongs to the ABI family. In terms of assembly, binds SCAR.

Its subcellular location is the cytoplasm. It is found in the cytoskeleton. Functionally, involved in regulation of actin and microtubule organization. Part of a WAVE complex that activates the Arp2/3 complex. This is Probable protein ABIL1 from Oryza sativa subsp. japonica (Rice).